Reading from the N-terminus, the 305-residue chain is UDP-N-acetylenolpyruvoylglucosamine reductase (305 aa).

In terms of domain architecture, FAD-binding PCMH-type spans 35–214 (VGGPAQALFT…RARMNEVQAH (180 aa)). Arg-179 is an active-site residue. Ser-228 (proton donor) is an active-site residue. Glu-298 is an active-site residue.

The protein belongs to the MurB family. Requires FAD as cofactor.

The protein resides in the cytoplasm. The enzyme catalyses UDP-N-acetyl-alpha-D-muramate + NADP(+) = UDP-N-acetyl-3-O-(1-carboxyvinyl)-alpha-D-glucosamine + NADPH + H(+). The protein operates within cell wall biogenesis; peptidoglycan biosynthesis. Functionally, cell wall formation. The chain is UDP-N-acetylenolpyruvoylglucosamine reductase from Nitrobacter winogradskyi (strain ATCC 25391 / DSM 10237 / CIP 104748 / NCIMB 11846 / Nb-255).